Here is a 416-residue protein sequence, read N- to C-terminus: Transcription factor IIIB 50 kDa subunit (416 aa).

The segment at 3 to 36 adopts a TFIIB-type zinc-finger fold; that stretch reads NGSRCPDCGSSELVEDSHYSQSQLVCSDCGCVVT. Zn(2+)-binding residues include Cys7, Cys10, Cys28, and Cys31. Tandem repeats lie at residues 72-157 and 173-249. The interval 108 to 114 is interaction with target DNA; that stretch reads AARLQKK. A disordered region spans residues 317 to 385; sequence AEVETKQQQP…TGDEDISDSE (69 aa). The residue at position 350 (Ser350) is a Phosphoserine. The required for the formation of a ternary complex with DNA and TBP; not required for interaction with TBP in the absence of DNA stretch occupies residues 354–360; it reads LLPPCML. Cys358 bears the Cysteine sulfenic acid (-SOH) mark. The required for interaction with TBP and formation of a ternary complex with DNA and TBP stretch occupies residues 362–416; that stretch reads PPKRTHTMPPDSVVTGDEDISDSEIEQYLRTPQEVRDFERAQAASRAAMSVPNPP.

The protein belongs to the TFIIB family. As to quaternary structure, component of TFIIIB complexes. The TFIIIB complex has two activities, alpha and beta. The TFIIIB-alpha activity complex is composed of TBP, BDP1, and a complex containing both BRF2 and at least four stably associated proteins; this complex inhibits the transcription by pol III via its phosphorylation by CK2; YY1 facilitates the TFIIIB-alpha complex formation. Interacts with TBP; this interaction promotes recruitment of BRF2 to TATA box-containing promoters. Interacts with TBP and the BURE sequence (GC-rich sequence downstream from the TATA box) to form a strong ternary complex which is joined by BDP1; this ternary complex stimulates pol III transcription. Forms a trimeric complex composed of TBP, BRF2 and mini-SNAPc complex (SNAP43, SNAP50, and the N-terminal third of SNAP190) on the promoter. Assembly of the TBP-BRF2 complex is stimulated by SNAP190. Interacts with MAF1 and SNAPC4. Post-translationally, in response to oxidative stress, Cys-358 is reversibly oxidized to cysteine sulfenic acid. Oxidation of Cys-358 impairs formation of a ternary complex with TBP and DNA and down-regulates expression of target genes in response to oxidative stress.

It is found in the nucleus. In terms of biological role, general activator of RNA polymerase III transcription. Factor exclusively required for RNA polymerase III transcription of genes with promoter elements upstream of the initiation sites. Contributes to the regulation of gene expression; functions as activator in the absence of oxidative stress. Down-regulates expression of target genes in response to oxidative stress. Overexpression protects cells against apoptosis in response to oxidative stress. The polypeptide is Transcription factor IIIB 50 kDa subunit (Brf2) (Rattus norvegicus (Rat)).